The following is an 83-amino-acid chain: RNA-binding protein Hfq (83 aa).

In terms of domain architecture, Sm spans 10–69 (DPFLNALRREHVPVSIYLVNGIKLQGQIESFDQYVVLLRNTVTQMVYKHAISTIVPGRAV).

Belongs to the Hfq family. In terms of assembly, homohexamer.

Functionally, RNA chaperone that binds small regulatory RNA (sRNAs) and mRNAs to facilitate mRNA translational regulation in response to envelope stress, environmental stress and changes in metabolite concentrations. Also binds with high specificity to tRNAs. The protein is RNA-binding protein Hfq of Paracidovorax citrulli (strain AAC00-1) (Acidovorax citrulli).